The chain runs to 59 residues: Cuticle protein 7 isoform b (59 aa).

Pyrrolidone carboxylic acid is present on Gln-1.

The polypeptide is Cuticle protein 7 isoform b (Limulus polyphemus (Atlantic horseshoe crab)).